A 347-amino-acid chain; its full sequence is Dihydroorotase (347 aa).

Zn(2+)-binding residues include histidine 13 and histidine 15. Substrate-binding positions include 15–17 (HLR) and asparagine 41. The Zn(2+) site is built by lysine 99, histidine 136, and histidine 174. Position 99 is an N6-carboxylysine (lysine 99). Residue histidine 136 participates in substrate binding. Leucine 219 lines the substrate pocket. Aspartate 247 contacts Zn(2+). Aspartate 247 is an active-site residue. Substrate is bound by residues histidine 251 and alanine 263.

This sequence belongs to the metallo-dependent hydrolases superfamily. DHOase family. Class II DHOase subfamily. Homodimer. It depends on Zn(2+) as a cofactor.

The catalysed reaction is (S)-dihydroorotate + H2O = N-carbamoyl-L-aspartate + H(+). Its pathway is pyrimidine metabolism; UMP biosynthesis via de novo pathway; (S)-dihydroorotate from bicarbonate: step 3/3. Functionally, catalyzes the reversible cyclization of carbamoyl aspartate to dihydroorotate. This Sinorhizobium medicae (strain WSM419) (Ensifer medicae) protein is Dihydroorotase.